Consider the following 209-residue polypeptide: Proteasome subunit beta (209 aa).

Residues Met1–Gly10 constitute a propeptide, removed in mature form; by autocatalysis. The Nucleophile role is filled by Thr11.

The protein belongs to the peptidase T1B family. In terms of assembly, the 20S proteasome core is composed of 14 alpha and 14 beta subunits that assemble into four stacked heptameric rings, resulting in a barrel-shaped structure. The two inner rings, each composed of seven catalytic beta subunits, are sandwiched by two outer rings, each composed of seven alpha subunits. The catalytic chamber with the active sites is on the inside of the barrel. Has a gated structure, the ends of the cylinder being occluded by the N-termini of the alpha-subunits. Is capped at one or both ends by the proteasome regulatory ATPase, PAN.

It is found in the cytoplasm. The catalysed reaction is Cleavage of peptide bonds with very broad specificity.. With respect to regulation, the formation of the proteasomal ATPase PAN-20S proteasome complex, via the docking of the C-termini of PAN into the intersubunit pockets in the alpha-rings, triggers opening of the gate for substrate entry. Interconversion between the open-gate and close-gate conformations leads to a dynamic regulation of the 20S proteasome proteolysis activity. In terms of biological role, component of the proteasome core, a large protease complex with broad specificity involved in protein degradation. The chain is Proteasome subunit beta from Methanospirillum hungatei JF-1 (strain ATCC 27890 / DSM 864 / NBRC 100397 / JF-1).